A 333-amino-acid polypeptide reads, in one-letter code: D-glutamate N-acetyltransferase (333 aa).

Belongs to the N-acetyltransferase DgcN family.

The enzyme catalyses D-glutamate + acetyl-CoA = N-acetyl-D-glutamate + CoA + H(+). It participates in amino-acid degradation. Its function is as follows. N-acetyltransferase involved in a deamination-independent D-glutamate degradation pathway, named the DgcN-DgcA pathway. Catalyzes the transfer of the acetyl moiety from acetyl-CoA to D-glutamate to generate N-acetyl-D-glutamate. The sequence is that of D-glutamate N-acetyltransferase from Tritonibacter scottomollicae (Epibacterium scottomollicae).